Consider the following 349-residue polypeptide: Gibberellin 3-beta-dioxygenase 3 (349 aa).

The region spanning 201 to 305 is the Fe2OG dioxygenase domain; that stretch reads SIQSFLQLNS…RVSAAYFAGP (105 aa). Fe cation is bound by residues His226, Asp228, and His286. The active site involves Arg296.

Belongs to the iron/ascorbate-dependent oxidoreductase family. GA3OX subfamily. It depends on L-ascorbate as a cofactor. Fe cation is required as a cofactor. As to expression, expressed in flower clusters and siliques.

The enzyme catalyses gibberellin A20 + 2-oxoglutarate + O2 = gibberellin A1 + succinate + CO2. It functions in the pathway plant hormone biosynthesis; gibberellin biosynthesis. Functionally, converts the inactive gibberellin (GA) precursors GA9 and GA20 in the bioactives gibberellins GA4 and GA1. Involved in the production of bioactive GA for reproductive development. The chain is Gibberellin 3-beta-dioxygenase 3 (GA3OX3) from Arabidopsis thaliana (Mouse-ear cress).